Reading from the N-terminus, the 63-residue chain is Venom peptide 2a (63 aa).

Residues 1-22 (MRGTSFILFAVVVILGFLNANA) form the signal peptide. 5 AXPX repeats span residues 22 to 25 (AEPL), 26 to 29 (ANPA), 32 to 35 (ANPD), 38 to 41 (ANPD), and 44 to 47 (ANPE). The propeptide occupies 23–48 (EPLANPAPLANPDPLANPDPLANPEA). Leu-62 bears the Leucine amide mark.

In terms of tissue distribution, expressed by the venom gland.

It is found in the secreted. The protein resides in the target cell membrane. Functionally, antimicrobial peptide. Shows activities against Gram-positive bacteria (S.aureus MIC=50 uM and 200 ug/ml, and B.subtilis MIC=200 ug/ml), Gram-negative bacterium E.coli (MIC=100 uM and 200 ug/ml) and fungi (B.cinerea MIC=5 uM, S.cerevisiae MIC=128 ug/ml, S.pombe MIC=128 ug/ml, A.nidulans MIC=128 ug/ml, and C.albicans MIC=64-100 uM). Shows cytolytic activity against insect cell lines. Its hemolytic activity is controversial, as Baek and colleagues report no activity while Bea and colleagues note a hemolytic activity. In vivo, peptide injection in the vicinity of the head and thorax of lepidopteran larvae induces feeding disorder followed by death due to starvation. Is weakly lethal when tested on water flies (D.magna), but is not lethal on lady beetles (H.convergens). This Eumenes pomiformis (Potter wasp) protein is Venom peptide 2a.